The sequence spans 477 residues: Lactate utilization protein B (477 aa).

2 consecutive 4Fe-4S ferredoxin-type domains span residues 304 to 334 and 353 to 382; these read GTQFQSILQCIRCAACVNVCPVYRQTGGHSY and YDTYKELPYASTLCGACTEACPVKIPLHDL. [4Fe-4S] cluster contacts are provided by Cys313, Cys316, Cys319, Cys323, Cys366, Cys369, and Cys373. The interval 443-463 is disordered; the sequence is GPKPLQAWTNSRDFPMPDDEN.

The protein belongs to the LutB/YkgF family.

Its function is as follows. Is involved in L-lactate degradation and allows cells to grow with lactate as the sole carbon source. Has probably a role as an electron transporter during oxidation of L-lactate. The chain is Lactate utilization protein B from Macrococcus caseolyticus (strain JCSC5402) (Macrococcoides caseolyticum).